Reading from the N-terminus, the 368-residue chain is Branched-chain-amino-acid aminotransferase (368 aa).

Arg101 contacts pyridoxal 5'-phosphate. N6-(pyridoxal phosphate)lysine is present on Lys204. Pyridoxal 5'-phosphate-binding positions include Tyr209 and 271-272; that span reads IT. Lys299 participates in a covalent cross-link: Isoglutamyl lysine isopeptide (Lys-Gln) (interchain with Q-Cter in protein Pup). Thr314 serves as a coordination point for pyridoxal 5'-phosphate.

Belongs to the class-IV pyridoxal-phosphate-dependent aminotransferase family. Homodimer. Pyridoxal 5'-phosphate is required as a cofactor.

The enzyme catalyses L-isoleucine + 2-oxoglutarate = (S)-3-methyl-2-oxopentanoate + L-glutamate. The catalysed reaction is L-valine + 2-oxoglutarate = 3-methyl-2-oxobutanoate + L-glutamate. It carries out the reaction L-leucine + 2-oxoglutarate = 4-methyl-2-oxopentanoate + L-glutamate. It participates in amino-acid biosynthesis; L-isoleucine biosynthesis; L-isoleucine from 2-oxobutanoate: step 4/4. It functions in the pathway amino-acid biosynthesis; L-leucine biosynthesis; L-leucine from 3-methyl-2-oxobutanoate: step 4/4. The protein operates within amino-acid biosynthesis; L-valine biosynthesis; L-valine from pyruvate: step 4/4. With respect to regulation, inhibited by ammonium sulfate at millimolar concentrations and by O-benzylhydroxylamine (Obe). Catalyzes the reversible transfers of an amino group from glutamate to the alpha-ketoacid of the respective amino acid in the final step in the biosynthesis of branchedchain amino acids. The amino acids can be ranked in the following order with respect to their efficiency as amino donor: Leu &gt; Ile &gt; Val. The polypeptide is Branched-chain-amino-acid aminotransferase (ilvE) (Mycolicibacterium smegmatis (strain ATCC 700084 / mc(2)155) (Mycobacterium smegmatis)).